The sequence spans 401 residues: NADH-dependent flavin oxidoreductase iliE (401 aa).

Residues 25 to 28 (ASMS) and Gln-107 each bind FMN. 188–191 (HAAH) contributes to the substrate binding site. 346 to 347 (AR) serves as a coordination point for FMN.

This sequence belongs to the NADH:flavin oxidoreductase/NADH oxidase family.

Functionally, NADH-dependent flavin oxidoreductase; part of the gene cluster that mediates the biosynthesis of ilicicolin H, a 4-hydroxy-2-pyridonealkaloid that has potent and broad antifungal activities by inhibiting the mitochondrial respiration chain. The biosynthesis of ilicicolin H starts with formation of the tetramic acid by the hybrid PKS-NRPS synthetase iliA with the partnering trans-enoyl reductase iliB since iliA lacks a designated enoylreductase (ER) domain. The cytochrome P450 monooxygenase iliC then catalyzes the ring expansion of the tetramate to the acyclic 2-pyridone. The pericyclase iliD further converts the acyclic 2-pyridone into 8-epi-ilicicolin H. 8-epi-ilicicolin H might then spontaneously convert to ilicicolin H since ilicicolin H is produced in the absence of the epimerase iliE, in contrast to what was observed for the Talaromyces variabilis ilicolin H biosynthetic pathway. This chain is NADH-dependent flavin oxidoreductase iliE, found in Hypocrea jecorina (strain QM6a) (Trichoderma reesei).